Consider the following 453-residue polypeptide: Endoglucanase A (453 aa).

An N-terminal signal peptide occupies residues 1 to 26 (MNCRKYLLSGLAVFGLAATSAVAALS). The active-site Nucleophile is Asp82. Residues 115-126 (TTPTTRKPTTTP) are linker ('hinge') (Pro-Thr box). His417 is a catalytic residue.

It belongs to the glycosyl hydrolase 9 (cellulase E) family. In terms of assembly, monomer.

It is found in the periplasm. It carries out the reaction Endohydrolysis of (1-&gt;4)-beta-D-glucosidic linkages in cellulose, lichenin and cereal beta-D-glucans.. Its function is as follows. High levels of endoglucanase activity detected on acid-swollen cellulose, ball-milled cellulose, and carboxymethyl cellulose; moderate levels detected on filter paper, phosphoric acid-swollen cellulose, lichenan, and xylan. The sequence is that of Endoglucanase A (endA) from Fibrobacter succinogenes (Bacteroides succinogenes).